Consider the following 158-residue polypeptide: Cyclic pyranopterin monophosphate synthase (158 aa).

Substrate contacts are provided by residues 76-78 and 114-115; these read LCH and ME. D129 is a catalytic residue.

This sequence belongs to the MoaC family. Homohexamer; trimer of dimers.

It carries out the reaction (8S)-3',8-cyclo-7,8-dihydroguanosine 5'-triphosphate = cyclic pyranopterin phosphate + diphosphate. It functions in the pathway cofactor biosynthesis; molybdopterin biosynthesis. Functionally, catalyzes the conversion of (8S)-3',8-cyclo-7,8-dihydroguanosine 5'-triphosphate to cyclic pyranopterin monophosphate (cPMP). In Shewanella baltica (strain OS223), this protein is Cyclic pyranopterin monophosphate synthase.